A 707-amino-acid polypeptide reads, in one-letter code: Protein O-mannosyl-transferase TMEM260 (707 aa).

8 consecutive transmembrane segments (helical) span residues 28 to 48 (GGVAVFAAVAAVFTFTLPPSV), 71 to 91 (YPLFTLVAKLAITLFPFGSIA), 94 to 114 (VNLLCGLFGAVAASLLFFTVF), 141 to 161 (IAAEVFSLNNLFVGLLMALTV), 189 to 209 (NQHTIILYVLCIIPWILFQLL), 222 to 242 (LSLYFSAGLLPYVHLPISSYL), 318 to 338 (NPSLVWLFTGMFCIYSLFFAW), and 356 to 376 (FWMQSNAVVAVLAGIGLAAVV). At 377–707 (SETNRVLNSN…LQSLRNRKNV (331 aa)) the chain is on the lumenal side. 3 N-linked (GlcNAc...) asparagine glycosylation sites follow: Asn-407, Asn-535, and Asn-568.

This sequence belongs to the glycosyltransferase 117 (GT117) family. Expressed in brain, heart, kidney, liver, lung, pancreas and placenta but are not detected in skeletal muscle.

It is found in the endoplasmic reticulum membrane. It localises to the membrane. The enzyme catalyses a di-trans,poly-cis-dolichyl beta-D-mannosyl phosphate + L-seryl-[protein] = 3-O-(alpha-D-mannosyl)-L-seryl-[protein] + a di-trans,poly-cis-dolichyl phosphate + H(+). It carries out the reaction a di-trans,poly-cis-dolichyl beta-D-mannosyl phosphate + L-threonyl-[protein] = 3-O-(alpha-D-mannosyl)-L-threonyl-[protein] + a di-trans,poly-cis-dolichyl phosphate + H(+). O-mannosyl-transferase that transfers mannosyl residues to the hydroxyl group of serine or threonine residues of proteins. Specifically glycosylates the IPT/TIG domain of target proteins, such as MET and MST1R/RON. TMEM260-mediated O-mannosylated residues are composed of single mannose glycans that are not elongated or modified. The polypeptide is Protein O-mannosyl-transferase TMEM260 (Homo sapiens (Human)).